A 166-amino-acid chain; its full sequence is Deglycase PH1704 (166 aa).

The PfpI endopeptidase domain maps to 1-166 (MKVLFLTANE…WMREFVKLLK (166 aa)). The active-site Nucleophile is Cys-100. Residue His-101 is part of the active site.

Belongs to the peptidase C56 family. In terms of assembly, homohexamer formed by a dimer of trimers that assemble into a hollow ring structure.

Its subcellular location is the cytoplasm. The catalysed reaction is N(omega)-(1-hydroxy-2-oxopropyl)-L-arginyl-[protein] + H2O = lactate + L-arginyl-[protein] + H(+). It carries out the reaction N(6)-(1-hydroxy-2-oxopropyl)-L-lysyl-[protein] + H2O = lactate + L-lysyl-[protein] + H(+). The enzyme catalyses S-(1-hydroxy-2-oxopropyl)-L-cysteinyl-[protein] + H2O = lactate + L-cysteinyl-[protein] + H(+). It catalyses the reaction N(omega)-(1-hydroxy-2-oxoethyl)-L-arginyl-[protein] + H2O = L-arginyl-[protein] + glycolate + H(+). The catalysed reaction is N(6)-(1-hydroxy-2-oxoethyl)-L-lysyl-[protein] + H2O = glycolate + L-lysyl-[protein] + H(+). It carries out the reaction S-(1-hydroxy-2-oxoethyl)-L-cysteinyl-[protein] + H2O = glycolate + L-cysteinyl-[protein] + H(+). Functionally, deglycase that catalyzes the deglycation of the Maillard adducts formed between amino groups of proteins and reactive carbonyl groups of glyoxals. Thus, functions as a protein deglycase that repairs methylglyoxal- and glyoxal-glycated proteins, and releases repaired proteins and lactate or glycolate, respectively. Deglycates cysteine, arginine and lysine residues in proteins, and thus reactivates these proteins by reversing glycation by glyoxals. Acts on early glycation intermediates (hemithioacetals and aminocarbinols), preventing the formation of advanced glycation endproducts (AGE) that cause irreversible damage. Also displays proteolytic activity. This is Deglycase PH1704 from Pyrococcus horikoshii (strain ATCC 700860 / DSM 12428 / JCM 9974 / NBRC 100139 / OT-3).